Consider the following 1265-residue polypeptide: MEPSGGGLGPGRGTRDKKKGRSPDELPATGGDGGKHKKFTLKRLMADELERFTSMRIKKEKEKPNSAHRNSSASYGDDPTAQSLQDISDDQVLVLFEQMLVDMNLNEEKQQPLREKDIVIKREMVSQYLHTSKAGMNQKESSRSAMMYIQELRSGLRDMHLLSCLESLRVSLNNNPVSWVQTFGAEGLASLLDILKRLHDEKEETSGNYDSRNQHEIIRCLKAFMNNKFGIKTMLETEEGILLLVRAMDPAVPNMMIDAAKLLSALCILPQPEDMNERVLEAMTERAEMEEVERFQPLLDGLKSGTSIALKVGCLQLINALITPAEELDFRVHIRSELMRLGLHQVLQELREIDNDDMRVQLNVFDEQGDEDFFDLKGRLDDIRMEMDDFGEVFQIILNTVKDSKAEPHFLSILQHLLLVRNDYEARPQYYKLIEECVSQIVLHKNGTDPDFKCRHLQIDIEGLVDQMIDKTKVEKSEAKATELEKKLDSELTARHELQVEMKKMENDFEQKLQDLQGEKDALDSEKQQITTQKQDLEAEVSKLTGEVAKLSKELEDAKKEMASLSAVAVAPSVSSSAAVPQAPPLPGTSGTVIPPPPPPPLPGGAVPPPPPPPLPAGTGIPPPPPLPGGACISSSPQLFGSTAIPPPPPLPGATAIPPPPPLPGDTAIPPPPPLPGXTAIPPPPPLPGATGVPPPPPPLPGSVGVPPPPPLPGGPGLPPPPPPFPGAPGIPPPPPGMGVPPPPPFGFGIPAAPVLPFGLTPKKVYKPEVQLRRPNWSKFVAEDLSQDCFWTKVKEDRFENNELFAKLTLAFSAQTKTSLAKKDQEGGEEKKSVQKKKVKELKVLDSKTAQNLSIFLGSFRMPYQEIKNVILEVNEAVLTESMIQNLIKQMPEPEQLKMLSELKEEYDDLAESEQFGVVMGTVPRLRPRLNAILFKLQFSEQVENIKPEIVSVTAACEELRKSENFSSLLELTLLVGNYMNAGSRNAGAFGFNISFLCKLRDTKSADQKMTLLHFLAELCETDHPDVLKFPDELAHVEKASRVSAENLQKNLDQMKKQIADVERDVQNFPAATDEKDKFVEKMTSFVKDAQEQYNKLRMMHSNMETLYKELGDYFVFDPKKLSVEEFFMDLHNFRNMFLQAVKENQKRRETEEKMRRAKLAKEKAEKERLEKQQKREQLIDMNAEGDETGVMDSLLEALQSGAAFRRKRGPRQVNRKAGCAVTSLLASELTKDDAVAASSAKVPKKSEGVTTILEEAKELVGRAS.

N-acetylmethionine is present on Met1. The span at Met1–Arg12 shows a compositional bias: gly residues. Disordered stretches follow at residues Met1–Lys42 and Ser54–Ser83. Ser22 is modified (phosphoserine). A compositionally biased stretch (basic and acidic residues) spans Ser54 to Asn65. The span at Ala67–Ser83 shows a compositional bias: polar residues. In terms of domain architecture, GBD/FH3 spans Leu84–Asp449. Residues Val474–Val568 adopt a coiled-coil conformation. Positions Ser573–Pro742 are disordered. Composition is skewed to pro residues over residues Ile594–Pro628 and Ile645–Pro742. The FH1 domain occupies Pro625–Pro757. At Thr761 the chain carries Phosphothreonine. Positions Pro762–Lys1164 constitute an FH2 domain. Lys1050 and Lys1096 each carry N6-acetyllysine. Phosphotyrosine is present on Tyr1114. Residues Ala1141–Glu1185 are a coiled coil. In terms of domain architecture, DAD spans Asp1187 to Asn1215. Ser1247 carries the post-translational modification Phosphoserine.

Belongs to the formin homology family. Diaphanous subfamily. Homodimer. Interacts with the GTP-bound form of RHOA. Interacts with RHOC, PFY1, MAPRE1, BAIAP2 and APC. Interacts with SCAI. Interacts with DCAF7, via FH2 domain. Interacts with NCDN. Interacts with OSBPL10, OSBPL2, VIM, TUBB and DYN1. Post-translationally, phosphorylation at Thr-761 is stimulated by cAMP and regulates stability, complex formation and mitochondrial movement. Expressed in testis. Present in Sertoli cells (at protein level).

It localises to the cell membrane. The protein resides in the cell projection. It is found in the ruffle membrane. The protein localises to the cytoplasm. Its subcellular location is the cytoskeleton. It localises to the microtubule organizing center. The protein resides in the centrosome. It is found in the spindle. The protein localises to the nucleus. Actin nucleation and elongation factor required for the assembly of F-actin structures, such as actin cables and stress fibers. Binds to the barbed end of the actin filament and slows down actin polymerization and depolymerization. Required for cytokinesis, and transcriptional activation of the serum response factor. DFR proteins couple Rho and Src tyrosine kinase during signaling and the regulation of actin dynamics. Functions as a scaffold protein for MAPRE1 and APC to stabilize microtubules and promote cell migration. Has neurite outgrowth promoting activity. Acts in a Rho-dependent manner to recruit PFY1 to the membrane. The MEMO1-RHOA-DIAPH1 signaling pathway plays an important role in ERBB2-dependent stabilization of microtubules at the cell cortex. It controls the localization of APC and CLASP2 to the cell membrane, via the regulation of GSK3B activity. In turn, membrane-bound APC allows the localization of the MACF1 to the cell membrane, which is required for microtubule capture and stabilization. Plays a role in the regulation of cell morphology and cytoskeletal organization. Required in the control of cell shape. Also acts as an actin nucleation and elongation factor in the nucleus by promoting nuclear actin polymerization inside the nucleus to drive serum-dependent SRF-MRTFA activity. This is Protein diaphanous homolog 1 from Rattus norvegicus (Rat).